Here is a 112-residue protein sequence, read N- to C-terminus: Small ribosomal subunit protein bS16 (112 aa).

Belongs to the bacterial ribosomal protein bS16 family.

This chain is Small ribosomal subunit protein bS16, found in Aquifex aeolicus (strain VF5).